Reading from the N-terminus, the 95-residue chain is Small ribosomal subunit protein bS16 (95 aa).

This sequence belongs to the bacterial ribosomal protein bS16 family.

This is Small ribosomal subunit protein bS16 from Roseiflexus sp. (strain RS-1).